Reading from the N-terminus, the 253-residue chain is Tropomyosin-1 (253 aa).

Residues 7–253 adopt a coiled-coil conformation; that stretch reads VNKLVRLQGK…MDDVGDDDTQ (247 aa).

The protein belongs to the tropomyosin family. Homodimer.

Functionally, tropomyosin, in association with the troponin complex, plays a central role in the calcium dependent regulation of muscle contraction. The chain is Tropomyosin-1 (TROP1) from Hydra vulgaris (Hydra).